Here is an 82-residue protein sequence, read N- to C-terminus: Mu-conotoxin MrVIB (82 aa).

A signal peptide spans 1–22 (MKLTCMMIVAVLFLTAWTLVMA). Residues 23 to 49 (DDSNNGLANHFLKSRDEMEDPEASKLE) constitute a propeptide that is removed on maturation. 3 disulfide bridges follow: Cys53–Cys71, Cys60–Cys76, and Cys70–Cys81.

This sequence belongs to the conotoxin O1 superfamily. In terms of tissue distribution, expressed by the venom duct.

The protein localises to the secreted. MuO-conotoxins are gating-modifier toxins that inhibit sodium current by trapping the domain II voltage sensor in the closed position to prevent opening of the sodium channel. This toxin has a preference for Nav1.4/SCN4A over Nav1.2/SCN2A sodium channels. It blocks Nav channels by interacting mainly with the C-terminal part of the pore loop of domain-3. It also blocks fast-inactivating calcium current. Blocks Nav1.8/SCN10A sodium channels and has potent and long-lasting local anesthetic effects. It can also block propagation of action potentials in A- and C-fibers in sciatic nerve as well as skeletal muscle in isolated preparations. The sequence is that of Mu-conotoxin MrVIB from Conus marmoreus (Marble cone).